Consider the following 252-residue polypeptide: 3-dehydroquinate dehydratase (252 aa).

Residues S21, 46-48 (EWR), and R82 each bind 3-dehydroquinate. H143 functions as the Proton donor/acceptor in the catalytic mechanism. Catalysis depends on K170, which acts as the Schiff-base intermediate with substrate. 3-dehydroquinate-binding residues include R213, S232, and Q236.

The protein belongs to the type-I 3-dehydroquinase family. In terms of assembly, dimer of dimers.

It catalyses the reaction 3-dehydroquinate = 3-dehydroshikimate + H2O. The protein operates within metabolic intermediate biosynthesis; chorismate biosynthesis; chorismate from D-erythrose 4-phosphate and phosphoenolpyruvate: step 3/7. Its activity is regulated as follows. Inhibited by (2R)-2-methyl-3-dehydroquinic acid. Involved in the third step of the chorismate pathway, which leads to the biosynthesis of aromatic amino acids. Catalyzes the cis-dehydration of 3-dehydroquinate (DHQ) and introduces the first double bond of the aromatic ring to yield 3-dehydroshikimate. The reaction involves the formation of an imine intermediate between the keto group of 3-dehydroquinate and the epsilon-amino group of Lys-170 at the active site. This chain is 3-dehydroquinate dehydratase, found in Salmonella typhi.